The following is a 1196-amino-acid chain: Probable cation-transporting ATPase 13A4 (1196 aa).

Over 1–31 the chain is Cytoplasmic; that stretch reads MGHFEKGQHALLNEGEENEMEIFGYRTQGCR. The stretch at 32-52 is an intramembrane region; it reads KSLCLAGSIFSFGILPLVFYW. Residues 53–197 lie on the Cytoplasmic side of the membrane; it reads RPAWHVWAHC…DVEVTPIWKL (145 aa). A helical transmembrane segment spans residues 198 to 218; that stretch reads LIKEVLNPFYIFQLFSVCLWF. Topologically, residues 219–223 are lumenal; the sequence is SEDYK. The chain crosses the membrane as a helical span at residues 224–244; that stretch reads EYAFAIIIMSIISISLTVYDL. Residues 245-400 lie on the Cytoplasmic side of the membrane; the sequence is REQSVKLHHL…NFQLYRDAIR (156 aa). Residues 401-421 form a helical membrane-spanning segment; that stretch reads FLLCLVGTATIGMIYTLCVYV. Residues 422–436 lie on the Lumenal side of the membrane; it reads LSGEPPEEVVRKALD. A helical membrane pass occupies residues 437 to 457; that stretch reads VITIAVPPALPAALTTGIIYA. At 458-900 the chain is on the cytoplasmic side; that stretch reads QRRLKKRGIF…KEGRAALVTS (443 aa). The active-site 4-aspartylphosphate intermediate is Asp-486. Mg(2+) is bound by residues Asp-848 and Asp-852. Residues 901-921 form a helical membrane-spanning segment; that stretch reads FCMFKYMALYSMIQYVGVLLL. Topologically, residues 922 to 932 are lumenal; the sequence is YWETNSLSNYQ. The helical transmembrane segment at 933-953 threads the bilayer; it reads FLFQDLAITTLIGVTMNLNGA. Residues 954 to 972 are Cytoplasmic-facing; it reads YPKLVPFRPAGRLISPPLL. The chain crosses the membrane as a helical span at residues 973 to 993; sequence LSVIFNILLSLAMHIAGFILV. The Lumenal segment spans residues 994-1035; the sequence is QRQPWYSVEIHSACTVQNESISELTMSPTAPEKMESNSTFTS. Residues 1036 to 1056 form a helical membrane-spanning segment; sequence FENTTVWFLGTINCITVALVF. At 1057-1070 the chain is on the cytoplasmic side; it reads SKGKPFRQPTYTNY. The chain crosses the membrane as a helical span at residues 1071 to 1091; the sequence is IFVLVLIIQLGVCLFILFADI. The Lumenal portion of the chain corresponds to 1092–1109; it reads PELYRRLDLLCTPVLWRA. A helical membrane pass occupies residues 1110-1130; that stretch reads SIVIMLSLNFIVSLVAEEAVI. The Cytoplasmic portion of the chain corresponds to 1131–1196; the sequence is ENRALWMMIK…PVFESNEEQL (66 aa).

The protein belongs to the cation transport ATPase (P-type) (TC 3.A.3) family. Type V subfamily. Expressed in heart, placenta, liver, skeletal muscles, and pancreas. Lower levels of expression are also detected in brain, lung and kidney. Weakly expressed in the adult brain. Expression in fetal brain is higher than in adult brain, with levels similar to several other fetal tissues including spleen and skeletal muscle. In adult brain expressed at low levels in all tissues examined, including the temporal lobe and putamen. Highly expressed in the respiratory and integumentary systems.

It is found in the early endosome membrane. The protein resides in the late endosome membrane. Its subcellular location is the recycling endosome membrane. The catalysed reaction is ATP + H2O = ADP + phosphate + H(+). This is Probable cation-transporting ATPase 13A4 (ATP13A4) from Homo sapiens (Human).